Reading from the N-terminus, the 153-residue chain is Phosphoribosyl-AMP cyclohydrolase (153 aa).

Mg(2+) is bound at residue D93. Position 94 (C94) interacts with Zn(2+). Mg(2+)-binding residues include D95 and D97. The Zn(2+) site is built by C112 and C119.

It belongs to the PRA-CH family. In terms of assembly, homodimer. Mg(2+) serves as cofactor. The cofactor is Zn(2+).

Its subcellular location is the cytoplasm. The catalysed reaction is 1-(5-phospho-beta-D-ribosyl)-5'-AMP + H2O = 1-(5-phospho-beta-D-ribosyl)-5-[(5-phospho-beta-D-ribosylamino)methylideneamino]imidazole-4-carboxamide. Its pathway is amino-acid biosynthesis; L-histidine biosynthesis; L-histidine from 5-phospho-alpha-D-ribose 1-diphosphate: step 3/9. Functionally, catalyzes the hydrolysis of the adenine ring of phosphoribosyl-AMP. This Mesorhizobium japonicum (strain LMG 29417 / CECT 9101 / MAFF 303099) (Mesorhizobium loti (strain MAFF 303099)) protein is Phosphoribosyl-AMP cyclohydrolase.